Consider the following 437-residue polypeptide: Purple acid phosphatase 18 (437 aa).

The first 23 residues, 1 to 23, serve as a signal peptide directing secretion; it reads MEKWGILLLVTLSVSIIFTSAAA. Fe cation contacts are provided by D148, D175, and Y178. D175 serves as a coordination point for Zn(2+). Residues N208 and H291 each contribute to the Zn(2+) site. N208 contacts substrate. The active-site Proton donor is H301. Residue H328 coordinates Zn(2+). Residue 328 to 330 participates in substrate binding; sequence HVH. H330 serves as a coordination point for Fe cation. N-linked (GlcNAc...) asparagine glycosylation is present at N390.

The protein belongs to the metallophosphoesterase superfamily. Purple acid phosphatase family. Homodimer. The cofactor is Fe cation. Zn(2+) is required as a cofactor. As to expression, expressed in roots, stems, leaves, flowers and siliques.

Its subcellular location is the secreted. It carries out the reaction a phosphate monoester + H2O = an alcohol + phosphate. The polypeptide is Purple acid phosphatase 18 (PAP18) (Arabidopsis thaliana (Mouse-ear cress)).